Reading from the N-terminus, the 453-residue chain is F-box/FBD/LRR-repeat protein At4g00160 (453 aa).

Residues 15-68 form the F-box domain; the sequence is KDRISELPDALLIKILSFLPTKIVVATSVFSKQWRPLWKLVPNLEFDSEDYDDK. LRR repeat units follow at residues 89–111, 165–190, 215–239, 247–270, 282–307, and 331–358; these read LESF…LWVG, MKSL…LLSG, VPSL…VINA, IEDL…IFDG, LTSV…IFYQ, and SPKL…KWNE. The FBD domain occupies 355 to 406; sequence KWNEPKYVPECLLSHLETFVWRRFDWGREEEKEIATYILKNARRLNKATFST.

This chain is F-box/FBD/LRR-repeat protein At4g00160, found in Arabidopsis thaliana (Mouse-ear cress).